The chain runs to 224 residues: Triosephosphate isomerase (224 aa).

9 to 11 (NFK) lines the substrate pocket. Histidine 93 (electrophile) is an active-site residue. Glutamate 141 functions as the Proton acceptor in the catalytic mechanism. Substrate contacts are provided by residues isoleucine 146, glycine 181, and 202–203 (AS).

Belongs to the triosephosphate isomerase family. As to quaternary structure, homotetramer; dimer of dimers.

It localises to the cytoplasm. The catalysed reaction is D-glyceraldehyde 3-phosphate = dihydroxyacetone phosphate. The protein operates within carbohydrate biosynthesis; gluconeogenesis. Its pathway is carbohydrate degradation; glycolysis; D-glyceraldehyde 3-phosphate from glycerone phosphate: step 1/1. Functionally, involved in the gluconeogenesis. Catalyzes stereospecifically the conversion of dihydroxyacetone phosphate (DHAP) to D-glyceraldehyde-3-phosphate (G3P). The polypeptide is Triosephosphate isomerase (Pyrobaculum arsenaticum (strain DSM 13514 / JCM 11321 / PZ6)).